Consider the following 396-residue polypeptide: NADH-quinone oxidoreductase subunit D (396 aa).

The protein belongs to the complex I 49 kDa subunit family. In terms of assembly, NDH-1 is composed of 14 different subunits. Subunits NuoB, C, D, E, F, and G constitute the peripheral sector of the complex.

It localises to the cell inner membrane. The enzyme catalyses a quinone + NADH + 5 H(+)(in) = a quinol + NAD(+) + 4 H(+)(out). NDH-1 shuttles electrons from NADH, via FMN and iron-sulfur (Fe-S) centers, to quinones in the respiratory chain. The immediate electron acceptor for the enzyme in this species is believed to be ubiquinone. Couples the redox reaction to proton translocation (for every two electrons transferred, four hydrogen ions are translocated across the cytoplasmic membrane), and thus conserves the redox energy in a proton gradient. This is NADH-quinone oxidoreductase subunit D from Orientia tsutsugamushi (strain Ikeda) (Rickettsia tsutsugamushi).